Reading from the N-terminus, the 62-residue chain is Photosystem II reaction center protein Z (62 aa).

The next 2 helical transmembrane spans lie at 8-28 and 41-61; these read AVFA…VVFA and FSGT…NSLI.

Belongs to the PsbZ family. As to quaternary structure, PSII is composed of 1 copy each of membrane proteins PsbA, PsbB, PsbC, PsbD, PsbE, PsbF, PsbH, PsbI, PsbJ, PsbK, PsbL, PsbM, PsbT, PsbY, PsbZ, Psb30/Ycf12, at least 3 peripheral proteins of the oxygen-evolving complex and a large number of cofactors. It forms dimeric complexes.

It localises to the plastid. The protein resides in the chloroplast thylakoid membrane. In terms of biological role, may control the interaction of photosystem II (PSII) cores with the light-harvesting antenna, regulates electron flow through the 2 photosystem reaction centers. PSII is a light-driven water plastoquinone oxidoreductase, using light energy to abstract electrons from H(2)O, generating a proton gradient subsequently used for ATP formation. In Vitis vinifera (Grape), this protein is Photosystem II reaction center protein Z.